The primary structure comprises 1438 residues: DNA polymerase III PolC-type (1438 aa).

In terms of domain architecture, Exonuclease spans 422–578 (YVVFDVETTG…YDTEATAYIF (157 aa)).

This sequence belongs to the DNA polymerase type-C family. PolC subfamily.

The protein localises to the cytoplasm. The catalysed reaction is DNA(n) + a 2'-deoxyribonucleoside 5'-triphosphate = DNA(n+1) + diphosphate. Required for replicative DNA synthesis. This DNA polymerase also exhibits 3' to 5' exonuclease activity. This is DNA polymerase III PolC-type from Staphylococcus aureus (strain MRSA252).